The sequence spans 199 residues: Recombination protein RecR (199 aa).

The C4-type zinc-finger motif lies at 56–71; that stretch reads CQVCFHLSAESTCEIC. The Toprim domain maps to 79-173; sequence QTLCVVADSR…KVTRIAFGLP (95 aa).

The protein belongs to the RecR family.

Its function is as follows. May play a role in DNA repair. It seems to be involved in an RecBC-independent recombinational process of DNA repair. It may act with RecF and RecO. This is Recombination protein RecR from Gloeothece citriformis (strain PCC 7424) (Cyanothece sp. (strain PCC 7424)).